The sequence spans 211 residues: UPF0637 protein BLi01683/BL05149 (211 aa).

Belongs to the UPF0637 family.

In Bacillus licheniformis (strain ATCC 14580 / DSM 13 / JCM 2505 / CCUG 7422 / NBRC 12200 / NCIMB 9375 / NCTC 10341 / NRRL NRS-1264 / Gibson 46), this protein is UPF0637 protein BLi01683/BL05149.